The chain runs to 74 residues: U3-agatoxin-Ao1g (74 aa).

A signal peptide spans 1–20 (MRAIISLLLISTMVFGVIEA). A propeptide spanning residues 21-34 (VSVEEGLKIFEGER) is cleaved from the precursor. 4 cysteine pairs are disulfide-bonded: cysteine 37–cysteine 53, cysteine 44–cysteine 58, cysteine 52–cysteine 68, and cysteine 60–cysteine 66. An Asparagine amide modification is found at asparagine 72.

This sequence belongs to the neurotoxin 07 (Beta/delta-agtx) family. 03 (aga-4) subfamily. Aga sub-subfamily. As to expression, expressed by the venom gland.

It is found in the secreted. In terms of biological role, insecticidal neurotoxin that modulates the insect Nav channel (DmNaV1/tipE (para/tipE)) in a unique manner, with both the activation and inactivation processes being affected. The voltage dependence of activation is shifted toward more hyperpolarized potentials (analogous to site 4 toxins) and a non-inactivating persistent sodium current is induced (site 3-like action). Interestingly, both effects take place in a voltage-dependent manner, producing a bell-shaped curve between -80 and 0 mV. The protein is U3-agatoxin-Ao1g of Agelena orientalis (Funnel-web spider).